The primary structure comprises 291 residues: 4-hydroxy-tetrahydrodipicolinate synthase (291 aa).

Thr-42 contacts pyruvate. Tyr-129 functions as the Proton donor/acceptor in the catalytic mechanism. Lys-157 (schiff-base intermediate with substrate) is an active-site residue. Ile-198 is a binding site for pyruvate.

This sequence belongs to the DapA family. As to quaternary structure, homotetramer; dimer of dimers.

The protein localises to the cytoplasm. It carries out the reaction L-aspartate 4-semialdehyde + pyruvate = (2S,4S)-4-hydroxy-2,3,4,5-tetrahydrodipicolinate + H2O + H(+). Its pathway is amino-acid biosynthesis; L-lysine biosynthesis via DAP pathway; (S)-tetrahydrodipicolinate from L-aspartate: step 3/4. In terms of biological role, catalyzes the condensation of (S)-aspartate-beta-semialdehyde [(S)-ASA] and pyruvate to 4-hydroxy-tetrahydrodipicolinate (HTPA). This chain is 4-hydroxy-tetrahydrodipicolinate synthase, found in Chlamydia pneumoniae (Chlamydophila pneumoniae).